A 129-amino-acid polypeptide reads, in one-letter code: UPF0102 protein Ctha_1382 (129 aa).

It belongs to the UPF0102 family.

This Chloroherpeton thalassium (strain ATCC 35110 / GB-78) protein is UPF0102 protein Ctha_1382.